The chain runs to 254 residues: Acetylglutamate kinase (254 aa).

Substrate-binding positions include 40 to 41 (GG), Arg62, and Asn158.

This sequence belongs to the acetylglutamate kinase family. ArgB subfamily.

Its subcellular location is the cytoplasm. It catalyses the reaction N-acetyl-L-glutamate + ATP = N-acetyl-L-glutamyl 5-phosphate + ADP. The protein operates within amino-acid biosynthesis; L-arginine biosynthesis; N(2)-acetyl-L-ornithine from L-glutamate: step 2/4. Its function is as follows. Catalyzes the ATP-dependent phosphorylation of N-acetyl-L-glutamate. In Chloroflexus aurantiacus (strain ATCC 29366 / DSM 635 / J-10-fl), this protein is Acetylglutamate kinase.